Consider the following 138-residue polypeptide: Putative pre-16S rRNA nuclease (138 aa).

The protein belongs to the YqgF nuclease family.

It localises to the cytoplasm. Could be a nuclease involved in processing of the 5'-end of pre-16S rRNA. The sequence is that of Putative pre-16S rRNA nuclease from Escherichia fergusonii (strain ATCC 35469 / DSM 13698 / CCUG 18766 / IAM 14443 / JCM 21226 / LMG 7866 / NBRC 102419 / NCTC 12128 / CDC 0568-73).